A 206-amino-acid polypeptide reads, in one-letter code: MCNEPATSDVALPDLDWAKGDGLLPVIVQDADTLRVLMLGYMNSQALEVTQRSRLVTFYSRSKQRLWTKGERSGHVLHLVAIDADCDADTLLVQARPRGPTCHLGRTSCFPAAPGQFLGALDALVAERERERPQDSYTTALFEQGVRRIAQKVGEEGVETALAGVVQVDDALLDESADLLYHLIVLLRARGLSLADAVTVLEARHR.

The phosphoribosyl-AMP cyclohydrolase stretch occupies residues 1 to 117; the sequence is MCNEPATSDV…SCFPAAPGQF (117 aa). The tract at residues 118-206 is phosphoribosyl-ATP pyrophosphohydrolase; that stretch reads LGALDALVAE…AVTVLEARHR (89 aa).

The protein in the N-terminal section; belongs to the PRA-CH family. This sequence in the C-terminal section; belongs to the PRA-PH family.

The protein localises to the cytoplasm. It carries out the reaction 1-(5-phospho-beta-D-ribosyl)-ATP + H2O = 1-(5-phospho-beta-D-ribosyl)-5'-AMP + diphosphate + H(+). The catalysed reaction is 1-(5-phospho-beta-D-ribosyl)-5'-AMP + H2O = 1-(5-phospho-beta-D-ribosyl)-5-[(5-phospho-beta-D-ribosylamino)methylideneamino]imidazole-4-carboxamide. It participates in amino-acid biosynthesis; L-histidine biosynthesis; L-histidine from 5-phospho-alpha-D-ribose 1-diphosphate: step 2/9. It functions in the pathway amino-acid biosynthesis; L-histidine biosynthesis; L-histidine from 5-phospho-alpha-D-ribose 1-diphosphate: step 3/9. This Xylella fastidiosa (strain 9a5c) protein is Histidine biosynthesis bifunctional protein HisIE (hisI).